The chain runs to 622 residues: Palmitoyltransferase pfa3 (622 aa).

Over M1–C38 the chain is Cytoplasmic. Residues T39 to V59 form a helical membrane-spanning segment. The Vacuolar segment spans residues D60–S76. The helical transmembrane segment at Y77–F97 threads the bilayer. Topologically, residues T98 to K175 are cytoplasmic. One can recognise a DHHC domain in the interval R132–I182. Residues A176–A196 traverse the membrane as a helical segment. At S197 to N217 the chain is on the vacuolar side. A helical membrane pass occupies residues Y218–W238. Residues H239 to D622 are Cytoplasmic-facing. 3 disordered regions span residues P298–A334, R419–D507, and D533–D622. Residues R302–R311 show a composition bias toward basic and acidic residues. Residues T313–P330 are compositionally biased toward polar residues. The span at R419–Q428 shows a compositional bias: basic and acidic residues. The span at Y443–P455 shows a compositional bias: polar residues. Residues P466–R488 show a composition bias toward low complexity. A compositionally biased stretch (acidic residues) spans D533–F547. A compositionally biased stretch (basic and acidic residues) spans N610–D622.

This sequence belongs to the DHHC palmitoyltransferase family. PFA3 subfamily. Autopalmitoylated.

It is found in the vacuole membrane. The enzyme catalyses L-cysteinyl-[protein] + hexadecanoyl-CoA = S-hexadecanoyl-L-cysteinyl-[protein] + CoA. Functionally, palmitoyltransferase specific for vac8. Palmitoylates vac8 at one or more of its N-terminal cysteine residues, which is required for its proper membrane localization. This is Palmitoyltransferase pfa3 (ptr-3) from Neurospora crassa (strain ATCC 24698 / 74-OR23-1A / CBS 708.71 / DSM 1257 / FGSC 987).